The chain runs to 405 residues: Argininosuccinate synthase (405 aa).

An ATP-binding site is contributed by 9–17 (AYSGGLDTS). L-citrulline-binding residues include Tyr-87 and Ser-92. An ATP-binding site is contributed by Gly-117. The L-aspartate site is built by Thr-119, Asn-123, and Asp-124. L-citrulline is bound at residue Asn-123. 5 residues coordinate L-citrulline: Arg-127, Ser-176, Ser-185, Glu-262, and Tyr-274.

The protein belongs to the argininosuccinate synthase family. Type 1 subfamily. As to quaternary structure, homotetramer.

The protein localises to the cytoplasm. It catalyses the reaction L-citrulline + L-aspartate + ATP = 2-(N(omega)-L-arginino)succinate + AMP + diphosphate + H(+). The protein operates within amino-acid biosynthesis; L-arginine biosynthesis; L-arginine from L-ornithine and carbamoyl phosphate: step 2/3. This is Argininosuccinate synthase from Caldicellulosiruptor saccharolyticus (strain ATCC 43494 / DSM 8903 / Tp8T 6331).